Consider the following 54-residue polypeptide: Potassium channel toxin alpha-KTx 14.1 (54 aa).

Positions 1-23 (MKIFFAILLILAVCSMAIWTVNG) are cleaved as a signal peptide.

It belongs to the short scorpion toxin superfamily. Potassium channel inhibitor family. Alpha-KTx 14 subfamily. Probably has three disulfide bridges. Expressed by the venom gland.

Its subcellular location is the secreted. Potential blocker of potassium channels. This Olivierus martensii (Manchurian scorpion) protein is Potassium channel toxin alpha-KTx 14.1.